Here is a 487-residue protein sequence, read N- to C-terminus: UDP-N-acetylmuramoyl-L-alanyl-D-glutamate--2,6-diaminopimelate ligase (487 aa).

Positions 23 and 25 each coordinate UDP-N-acetyl-alpha-D-muramoyl-L-alanyl-D-glutamate. 108–114 (GTNGKTS) lines the ATP pocket. Residues 150–151 (TT), S177, Q183, and R185 contribute to the UDP-N-acetyl-alpha-D-muramoyl-L-alanyl-D-glutamate site. K217 carries the N6-carboxylysine modification. Meso-2,6-diaminopimelate is bound by residues R378, 402 to 405 (DNPR), G453, and E457. The Meso-diaminopimelate recognition motif signature appears at 402 to 405 (DNPR).

This sequence belongs to the MurCDEF family. MurE subfamily. Mg(2+) serves as cofactor. Carboxylation is probably crucial for Mg(2+) binding and, consequently, for the gamma-phosphate positioning of ATP.

Its subcellular location is the cytoplasm. It carries out the reaction UDP-N-acetyl-alpha-D-muramoyl-L-alanyl-D-glutamate + meso-2,6-diaminopimelate + ATP = UDP-N-acetyl-alpha-D-muramoyl-L-alanyl-gamma-D-glutamyl-meso-2,6-diaminopimelate + ADP + phosphate + H(+). Its pathway is cell wall biogenesis; peptidoglycan biosynthesis. In terms of biological role, catalyzes the addition of meso-diaminopimelic acid to the nucleotide precursor UDP-N-acetylmuramoyl-L-alanyl-D-glutamate (UMAG) in the biosynthesis of bacterial cell-wall peptidoglycan. This chain is UDP-N-acetylmuramoyl-L-alanyl-D-glutamate--2,6-diaminopimelate ligase, found in Pseudomonas aeruginosa (strain ATCC 15692 / DSM 22644 / CIP 104116 / JCM 14847 / LMG 12228 / 1C / PRS 101 / PAO1).